The sequence spans 165 residues: Trypsin alpha-3 (165 aa).

The Peptidase S1 domain occupies 1-163 (NSGGVLVSVA…LRSWVVSAAN (163 aa)). The Charge relay system role is filled by Asp26. Intrachain disulfides connect Cys89–Cys106 and Cys115–Cys139. Ser119 functions as the Charge relay system in the catalytic mechanism.

This sequence belongs to the peptidase S1 family.

It localises to the secreted. Its subcellular location is the extracellular space. It carries out the reaction Preferential cleavage: Arg-|-Xaa, Lys-|-Xaa.. In Lucilia cuprina (Green bottle fly), this protein is Trypsin alpha-3.